The following is a 607-amino-acid chain: CRS2-associated factor 2, chloroplastic (607 aa).

Positions 1-75 (MSPPPPQRPS…GNGGNPAFRA (75 aa)) are disordered. The transit peptide at 1-79 (MSPPPPQRPS…NPAFRAPHLR (79 aa)) directs the protein to the chloroplast. CRM domains are found at residues 228–324 (EPLT…TRPR) and 346–442 (EGLT…YPKP). The CRS2 binding stretch occupies residues 482–505 (KMFELWTNAIESSVALMLDDAEVD). A disordered region spans residues 550-576 (TEDEPETGTLEPQQHEFTESSDVAEDD).

Interacts with CRS2 and RNA. Part of large ribonucleo-protein complexes that include group IIB introns, CRS2 and CAF2.

It is found in the plastid. Its subcellular location is the chloroplast stroma. Required for the splicing of group IIB introns in chloroplasts. Forms splicing particles with CRS2. Interacts with RNA and confers intron specificity of the splicing particles. The polypeptide is CRS2-associated factor 2, chloroplastic (Oryza sativa subsp. japonica (Rice)).